A 477-amino-acid polypeptide reads, in one-letter code: UDP-N-acetylmuramate--L-alanine ligase (477 aa).

Gly125–Thr131 contributes to the ATP binding site.

The protein belongs to the MurCDEF family.

Its subcellular location is the cytoplasm. The enzyme catalyses UDP-N-acetyl-alpha-D-muramate + L-alanine + ATP = UDP-N-acetyl-alpha-D-muramoyl-L-alanine + ADP + phosphate + H(+). Its pathway is cell wall biogenesis; peptidoglycan biosynthesis. Its function is as follows. Cell wall formation. The sequence is that of UDP-N-acetylmuramate--L-alanine ligase from Acidothermus cellulolyticus (strain ATCC 43068 / DSM 8971 / 11B).